Reading from the N-terminus, the 1441-residue chain is Histone-lysine N-methyltransferase SETD5 (1441 aa).

The interval 1 to 28 (MSIAIPLGVTTPDTSYSDMAAGSDPESV) is disordered. Leucine 70 bears the Phosphothreonine mark. A phosphoserine mark is found at serine 72 and valine 74. Residues 156-202 (TPTSITLTVRRTKPKKRKKSPEKGRAAPKTKKIKNSPSEAQNLDENT) form a disordered region. The segment covering 165–189 (RRTKPKKRKKSPEKGRAAPKTKKIK) has biased composition (basic residues). Residues 190 to 202 (NSPSEAQNLDENT) show a composition bias toward polar residues. In terms of domain architecture, SET spans 269–390 (MQLQLGRVTR…KDAEVTIAFD (122 aa)). Disordered regions lie at residues 417-683 (NPNA…TVIS) and 793-816 (MTQT…ETSN). Composition is skewed to acidic residues over residues 450–461 (LEQQNEVPEENP) and 479–501 (EEVD…DDQE). Composition is skewed to low complexity over residues 539 to 552 (SSSD…SSEI) and 561 to 572 (AAPESEVSSPVS). Residues 575–588 (AIPSTPQSTGVNTR) show a composition bias toward polar residues. The span at 611-621 (SRPRPKSRISR) shows a compositional bias: basic residues. Over residues 635-650 (QAIAQQAELSQAALEE) the composition is skewed to low complexity. Over residues 652–683 (GSNNSVTPPEAGNTDSSGENRQLTGSDPTVIS) the composition is skewed to polar residues. Phosphoserine is present on residues serine 829 and serine 852. 3 disordered regions span residues 849-883 (QPLS…ECRN), 1036-1228 (DLSR…SKGA), and 1243-1441 (CDSP…TGLS). Phosphothreonine is present on threonine 855. A compositionally biased stretch (basic residues) spans 1062–1076 (QRKKVSLLEYRKRKQ). Residues 1087-1107 (DSSQSKSKSSGAGQGSSNSVS) show a composition bias toward low complexity. A compositionally biased stretch (polar residues) spans 1144-1163 (PSDSRGTSSSHCRPQENISS). Phosphoserine is present on serine 1197. Over residues 1250 to 1259 (SQSLLQQSSS) the composition is skewed to low complexity. Over residues 1265-1275 (PTQSPGYSYRT) the composition is skewed to polar residues. Residues 1284–1300 (PSHGSSESSLSSTSYPS) are compositionally biased toward low complexity. Residues 1319 to 1333 (YYSSQPHSGNSTGSN) are compositionally biased toward polar residues. Over residues 1335-1372 (PRRSCSSSAASPTPQGPSDSPTSDSVSQSSTGTLSSTS) the composition is skewed to low complexity. Polar residues-rich tracts occupy residues 1373–1382 (FPQNSRSSLP), 1389–1412 (SLPN…NSQH), and 1429–1441 (LQGS…TGLS).

In terms of assembly, interacts with components of the PAF1 complex (PAF1C) such as LEO1, CTR9 and CDC73. Interacts with NCOR1. Interacts with HDAC3. As to expression, ubiquitously expressed.

The protein localises to the nucleus. It localises to the chromosome. The catalysed reaction is L-lysyl(9)-[histone H3] + S-adenosyl-L-methionine = N(6)-methyl-L-lysyl(9)-[histone H3] + S-adenosyl-L-homocysteine + H(+). It catalyses the reaction L-lysyl(36)-[histone H3] + 3 S-adenosyl-L-methionine = N(6),N(6),N(6)-trimethyl-L-lysyl(36)-[histone H3] + 3 S-adenosyl-L-homocysteine + 3 H(+). Chromatin regulator required for brain development: acts as a regulator of RNA elongation rate, thereby regulating neural stem cell (NSC) proliferation and synaptic transmission. May act by mediating trimethylation of 'Lys-36' of histone H3 (H3K36me3), which is essential to allow on-time RNA elongation dynamics. Also monomethylates 'Lys-9' of histone H3 (H3K9me1) in vitro. The relevance of histone methyltransferase activity is however subject to discussion. This Mus musculus (Mouse) protein is Histone-lysine N-methyltransferase SETD5.